The sequence spans 167 residues: Ribosome maturation factor RimM (167 aa).

Residues 92–166 (DDEFYHADLI…RIVADPPEEQ (75 aa)) form the PRC barrel domain.

It belongs to the RimM family. As to quaternary structure, binds ribosomal protein uS19.

The protein localises to the cytoplasm. An accessory protein needed during the final step in the assembly of 30S ribosomal subunit, possibly for assembly of the head region. Essential for efficient processing of 16S rRNA. May be needed both before and after RbfA during the maturation of 16S rRNA. It has affinity for free ribosomal 30S subunits but not for 70S ribosomes. In Paracoccus denitrificans (strain Pd 1222), this protein is Ribosome maturation factor RimM.